A 140-amino-acid chain; its full sequence is Large ribosomal subunit protein uL11 (140 aa).

It belongs to the universal ribosomal protein uL11 family. As to quaternary structure, part of the ribosomal stalk of the 50S ribosomal subunit. Interacts with L10 and the large rRNA to form the base of the stalk. L10 forms an elongated spine to which L12 dimers bind in a sequential fashion forming a multimeric L10(L12)X complex. Post-translationally, one or more lysine residues are methylated.

In terms of biological role, forms part of the ribosomal stalk which helps the ribosome interact with GTP-bound translation factors. The polypeptide is Large ribosomal subunit protein uL11 (Pelobacter propionicus (strain DSM 2379 / NBRC 103807 / OttBd1)).